Reading from the N-terminus, the 471-residue chain is Alpha-galactosidase (471 aa).

An N-terminal signal peptide occupies residues 1 to 18; it reads MFLLYLFTSFAAVSGVLG. The cysteines at positions 42 and 74 are disulfide-linked. D72 and D73 together coordinate substrate. The N-linked (GlcNAc...) asparagine glycan is linked to N82. C121 and C151 are joined by a disulfide. K147 contributes to the substrate binding site. D149 acts as the Nucleophile in catalysis. A glycan (N-linked (GlcNAc...) asparagine) is linked at N175. R205 contacts substrate. The active-site Proton donor is the D209. 2 disulfides stabilise this stretch: C221–C237 and C223–C230. Residue Q251 coordinates substrate. N270, N403, N412, N417, N422, N435, and N454 each carry an N-linked (GlcNAc...) asparagine glycan.

This sequence belongs to the glycosyl hydrolase 27 family. Homotetramer.

It localises to the secreted. It catalyses the reaction Hydrolysis of terminal, non-reducing alpha-D-galactose residues in alpha-D-galactosides, including galactose oligosaccharides, galactomannans and galactolipids.. In Saccharomyces pastorianus (strain ATCC 76529 / Carlsberg bottom yeast no.1 / CBS 1513 / CLIB 176 / NBRC 1167 / NCYC 396 / NRRL Y-12693) (Saaz-type lager yeast), this protein is Alpha-galactosidase (MEL).